A 256-amino-acid polypeptide reads, in one-letter code: Pyridoxine 5'-phosphate synthase (256 aa).

Asn-12 serves as a coordination point for 3-amino-2-oxopropyl phosphate. A 1-deoxy-D-xylulose 5-phosphate-binding site is contributed by 14-15; that stretch reads DH. A 3-amino-2-oxopropyl phosphate-binding site is contributed by Arg-23. The Proton acceptor role is filled by His-48. The 1-deoxy-D-xylulose 5-phosphate site is built by Arg-50 and His-55. Glu-75 functions as the Proton acceptor in the catalytic mechanism. 1-deoxy-D-xylulose 5-phosphate is bound at residue Thr-105. The Proton donor role is filled by His-199. 3-amino-2-oxopropyl phosphate contacts are provided by residues Gly-200 and 221–222; that span reads GY.

Belongs to the PNP synthase family. In terms of assembly, homooctamer; tetramer of dimers.

Its subcellular location is the cytoplasm. It carries out the reaction 3-amino-2-oxopropyl phosphate + 1-deoxy-D-xylulose 5-phosphate = pyridoxine 5'-phosphate + phosphate + 2 H2O + H(+). It participates in cofactor biosynthesis; pyridoxine 5'-phosphate biosynthesis; pyridoxine 5'-phosphate from D-erythrose 4-phosphate: step 5/5. Its function is as follows. Catalyzes the complicated ring closure reaction between the two acyclic compounds 1-deoxy-D-xylulose-5-phosphate (DXP) and 3-amino-2-oxopropyl phosphate (1-amino-acetone-3-phosphate or AAP) to form pyridoxine 5'-phosphate (PNP) and inorganic phosphate. The chain is Pyridoxine 5'-phosphate synthase from Bradyrhizobium sp. (strain ORS 278).